The chain runs to 255 residues: Hemin import ATP-binding protein HmuV (255 aa).

Positions 2–238 (LRVENLHVRR…EPLKAVFGLE (237 aa)) constitute an ABC transporter domain. 34–41 (GPNGAGKS) contributes to the ATP binding site.

Belongs to the ABC transporter superfamily. Heme (hemin) importer (TC 3.A.1.14.5) family. The complex is composed of two ATP-binding proteins (HmuV), two transmembrane proteins (HmuU) and a solute-binding protein (HmuT).

It localises to the cell inner membrane. Part of the ABC transporter complex HmuTUV involved in hemin import. Responsible for energy coupling to the transport system. The protein is Hemin import ATP-binding protein HmuV of Pseudomonas fluorescens (strain ATCC BAA-477 / NRRL B-23932 / Pf-5).